The primary structure comprises 35 residues: Turgencin-B (35 aa).

A methionine sulfoxide mark is found at methionine 5 and methionine 9. Intrachain disulfides connect cysteine 7–cysteine 31, cysteine 11–cysteine 27, and cysteine 16–cysteine 24. Glycine 35 is modified (glycine amide).

Post-translationally, oxidation likely reduces antimicrobial activity against Gram-positive bacteria and Gram-negative bacteria.

Its subcellular location is the secreted. In terms of biological role, has antimicrobial activity against Gram-positive bacteria (C.glutamicum ATCC 13032 (MIC=1.6 uM) and B.subtilis ATCC 23857 (MIC=1.6 uM)) and Gram-negative bacteria (E.coli ATCC 25922 (MIC=12.5 uM) and P.aeruginosa ATCC 27853 (MIC=25.0 uM)). Displays very low activity against the Gram-positive bacteria S.aureus ATCC 9144 (MIC&gt;100 uM). The polypeptide is Turgencin-B (Synoicum turgens (Colonial ascidian)).